The sequence spans 184 residues: Large ribosomal subunit protein uL15 (184 aa).

The interval 1-45 is disordered; that stretch reads MDLSSLRPAKGAVKNKKRVGRGQGSGNGTTAGKGNNGQQSRSGYK. Residues 21–35 are compositionally biased toward gly residues; sequence RGQGSGNGTTAGKGN.

Belongs to the universal ribosomal protein uL15 family. Part of the 50S ribosomal subunit.

Functionally, binds to the 23S rRNA. The protein is Large ribosomal subunit protein uL15 of Pelodictyon phaeoclathratiforme (strain DSM 5477 / BU-1).